A 129-amino-acid chain; its full sequence is KVFERCELARTLKELGLDGYKGVSLANWLCLTKWESSYNTKATNYNPGSESTDYGIFQINSKWWCDDGKTPNAVDGCHVACSELMENNIDKAVTCAKQIVREQGITAWVAWKSHCRGHDVSSYVEGCTL.

In terms of domain architecture, C-type lysozyme spans Lys1–Leu129. Cystine bridges form between Cys6–Cys127, Cys30–Cys115, Cys65–Cys81, and Cys77–Cys95. Catalysis depends on residues Glu35 and Asp53.

It belongs to the glycosyl hydrolase 22 family. Monomer.

The enzyme catalyses Hydrolysis of (1-&gt;4)-beta-linkages between N-acetylmuramic acid and N-acetyl-D-glucosamine residues in a peptidoglycan and between N-acetyl-D-glucosamine residues in chitodextrins.. Functionally, lysozymes have primarily a bacteriolytic function; those in tissues and body fluids are associated with the monocyte-macrophage system and enhance the activity of immunoagents. In Axis axis (Axis deer), this protein is Lysozyme C-1/C-2.